Here is a 289-residue protein sequence, read N- to C-terminus: Probable endonuclease 4 (289 aa).

Positions 74, 115, 150, 184, 187, 218, 231, 233, and 263 each coordinate Zn(2+).

It belongs to the AP endonuclease 2 family. Requires Zn(2+) as cofactor.

The enzyme catalyses Endonucleolytic cleavage to 5'-phosphooligonucleotide end-products.. Functionally, endonuclease IV plays a role in DNA repair. It cleaves phosphodiester bonds at apurinic or apyrimidinic (AP) sites, generating a 3'-hydroxyl group and a 5'-terminal sugar phosphate. This Mycoplasma mycoides subsp. mycoides SC (strain CCUG 32753 / NCTC 10114 / PG1) protein is Probable endonuclease 4.